Reading from the N-terminus, the 56-residue chain is UPF0434 protein ECH_0194 (56 aa).

This sequence belongs to the UPF0434 family.

The sequence is that of UPF0434 protein ECH_0194 from Ehrlichia chaffeensis (strain ATCC CRL-10679 / Arkansas).